The chain runs to 1410 residues: Pogo transposable element with ZNF domain (1410 aa).

Residues 238-291 (RSTVPQSQSQQTKSTPSTSTTPTATQPTSLGQLAVQSPGQSNQTTNPKLAPSFP) form a disordered region. The span at 239-266 (STVPQSQSQQTKSTPSTSTTPTATQPTS) shows a compositional bias: low complexity. Positions 267 to 284 (LGQLAVQSPGQSNQTTNP) are enriched in polar residues. Lysine 319 is covalently cross-linked (Glycyl lysine isopeptide (Lys-Gly) (interchain with G-Cter in SUMO2)). The interval 332–361 (QSPGPVVVSNNSSAHGSQRTSGPESSMKVT) is disordered. Residue serine 333 is modified to Phosphoserine. The span at 345 to 361 (AHGSQRTSGPESSMKVT) shows a compositional bias: polar residues. Residue lysine 359 forms a Glycyl lysine isopeptide (Lys-Gly) (interchain with G-Cter in SUMO2) linkage. Serine 363 is subject to Phosphoserine. The C2H2-type 1; atypical zinc-finger motif lies at 375-397 (KICPRCNAQFRVTEALRGHMCYC). A disordered region spans residues 409-456 (KSLDSEPSVPSAAKPPSPEKTAPVASTPSSTPIPALSPPTKVPEPNEN). Lysine 422 participates in a covalent cross-link: Glycyl lysine isopeptide (Lys-Gly) (interchain with G-Cter in SUMO2). A Phosphoserine modification is found at serine 425. Phosphothreonine is present on threonine 439. Position 445 is a phosphoserine (serine 445). A Glycyl lysine isopeptide (Lys-Gly) (interchain with G-Cter in SUMO2) cross-link involves residue lysine 449. Threonine 463 bears the Phosphothreonine mark. Residue lysine 489 forms a Glycyl lysine isopeptide (Lys-Gly) (interchain with G-Cter in SUMO2) linkage. 6 consecutive C2H2-type zinc fingers follow at residues 494–516 (FRCP…MKHH), 530–553 (TICQ…ENVH), 560–583 (TKCK…KDTH), 590–613 (YVCQ…RMIH), 619–641 (LLCP…YMRH), and 647–670 (YHCN…LQHH). Residue lysine 629 forms a Glycyl lysine isopeptide (Lys-Gly) (interchain with G-Cter in SUMO2) linkage. Lysine 677 is covalently cross-linked (Glycyl lysine isopeptide (Lys-Gly) (interchain with G-Cter in SUMO2)). Positions 693–715 (SRGQPRTVPVSSNDTPPSALQEA) are disordered. Positions 701–710 (PVSSNDTPPS) are enriched in polar residues. The C2H2-type 8 zinc finger occupies 771–794 (VHCSLCRYSTCCSRAYANHMINNH). Lysine 801 participates in a covalent cross-link: Glycyl lysine isopeptide (Lys-Gly) (interchain with G-Cter in SUMO2). The tract at residues 810-850 (VSGIKLACTSCTFVTSVGDAMAKHLVFNPSHRSSSILPRGL) is required for interaction with CBX5. A C2H2-type 9 zinc finger spans residues 815–840 (LACTSCTFVTSVGDAMAKHLVFNPSH). Serine 856 carries the phosphoserine modification. 2 disordered regions span residues 857–927 (RHGQ…PQAL) and 942–969 (VDDQ…GVGK). Positions 860 to 870 (QTRDRVHDRNV) are enriched in basic and acidic residues. Lysine 883 is covalently cross-linked (Glycyl lysine isopeptide (Lys-Gly) (interchain with G-Cter in SUMO2)). A compositionally biased stretch (low complexity) spans 892–915 (ATPAEPEELLTPLAPALPSPASTA). The HTH CENPB-type domain occupies 1015 to 1085 (GENLEGKYLS…MLRHHLTPHA (71 aa)). The region spanning 1117 to 1323 (LPLSMIVAID…DCPELVQRSF (207 aa)) is the DDE-1 domain. Serine 1338 carries the phosphoserine modification. The stretch at 1340 to 1360 (TRNADMQEELIASLEEQLKLS) forms a coiled coil. A disordered region spans residues 1360 to 1400 (SGEHSESSTPRPRSSPEETIEPESLHQLFEGESETESFYGF). 2 positions are modified to phosphoserine: serine 1364 and serine 1367. Position 1368 is a phosphothreonine (threonine 1368). Residues serine 1373 and serine 1374 each carry the phosphoserine modification. The residue at position 1378 (threonine 1378) is a Phosphothreonine. Residues 1380 to 1404 (EPESLHQLFEGESETESFYGFEEAD) carry the Integrase domain-binding motif (IBM) motif. Serine 1392 is subject to Phosphoserine; by CK2. A Phosphothreonine modification is found at threonine 1394. At serine 1396 the chain carries Phosphoserine; by CK2.

Interacts with CBX1, CBX3, MAD2L2 and CHAMP1. Interacts with CBX5; POGZ competes with PXVXL motif-containing proteins such as INCENP and TRIM28 for interaction with CBX5. Interacts (via IBM motif) with PSIP1 isoform 1 (via IBD domain); phosphorylation increases its affinity for PSIP1. Interacts with HDGFL2. In terms of processing, phosphorylation increases its interaction with PSIP1.

It localises to the nucleus. The protein resides in the chromosome. The protein localises to the cytoplasm. Functionally, plays a role in mitotic cell cycle progression and is involved in kinetochore assembly and mitotic sister chromatid cohesion. Probably through its association with CBX5 plays a role in mitotic chromosome segregation by regulating aurora kinase B/AURKB activation and AURKB and CBX5 dissociation from chromosome arms. Promotes the repair of DNA double-strand breaks through the homologous recombination pathway. This Homo sapiens (Human) protein is Pogo transposable element with ZNF domain (POGZ).